The sequence spans 123 residues: MEKSPPETAAAAAEVAARFRSLVDTGDIGAIRQTQHLILGRLQDSNAVLTHFNEYSEQCFAEVSNDFASKTRLLKSMKDDLDHIFLKLRSMKSRLAATYPDAFPDGAMAKTMDQRPDLESPLD.

Positions 78-81 match the KxDL motif; the sequence is KDDL.

The protein belongs to the KXD1 family. In terms of assembly, homodimer. Component of a nuclear cell elongation controlling complex made of ILI5/BUL1, LO9-177 and BC1. Binds directly to ILI5/BUL1, ILI4/BU1, BUL2 and BUL3. Binds to BC1 in the nucleus. Interacts with BCL1.

The protein resides in the nucleus. The protein localises to the cytoplasm. Functionally, contributes, together with ILI5/BUL1 and BC1, to the promotion of leaf inclination and grain size by modulating cell elongation. This chain is KxDL motif-containing protein LO9-177, found in Oryza sativa subsp. indica (Rice).